The following is a 425-amino-acid chain: UDP-N-acetylglucosamine 1-carboxyvinyltransferase (425 aa).

Lys23 to Asn24 provides a ligand contact to phosphoenolpyruvate. Position 100 (Arg100) interacts with UDP-N-acetyl-alpha-D-glucosamine. The Proton donor role is filled by Cys124. 2-(S-cysteinyl)pyruvic acid O-phosphothioketal is present on Cys124. UDP-N-acetyl-alpha-D-glucosamine is bound by residues Asp313 and Ile335.

Belongs to the EPSP synthase family. MurA subfamily.

Its subcellular location is the cytoplasm. The enzyme catalyses phosphoenolpyruvate + UDP-N-acetyl-alpha-D-glucosamine = UDP-N-acetyl-3-O-(1-carboxyvinyl)-alpha-D-glucosamine + phosphate. Its pathway is cell wall biogenesis; peptidoglycan biosynthesis. Functionally, cell wall formation. Adds enolpyruvyl to UDP-N-acetylglucosamine. This Wolbachia sp. subsp. Drosophila simulans (strain wRi) protein is UDP-N-acetylglucosamine 1-carboxyvinyltransferase.